The primary structure comprises 148 residues: Hemoglobin subunit beta-4 (148 aa).

The 146-residue stretch at 3–148 (DWTDPERSAI…VVSALGRQYH (146 aa)) folds into the Globin domain. Residues H64 and H93 each coordinate heme b.

Belongs to the globin family. In terms of assembly, heterotetramer of two alpha chains and two beta chains. In terms of tissue distribution, red blood cells.

Its function is as follows. Involved in oxygen transport from gills to the various peripheral tissues. This chain is Hemoglobin subunit beta-4 (hbb4), found in Oncorhynchus mykiss (Rainbow trout).